The sequence spans 360 residues: Phosphoserine aminotransferase (360 aa).

L-glutamate is bound at residue arginine 41. Residues 75–76, tryptophan 101, threonine 152, aspartate 172, and glutamine 195 contribute to the pyridoxal 5'-phosphate site; that span reads GR. Lysine 196 carries the N6-(pyridoxal phosphate)lysine modification. 237 to 238 is a pyridoxal 5'-phosphate binding site; sequence NT.

The protein belongs to the class-V pyridoxal-phosphate-dependent aminotransferase family. SerC subfamily. As to quaternary structure, homodimer. Pyridoxal 5'-phosphate serves as cofactor.

Its subcellular location is the cytoplasm. It catalyses the reaction O-phospho-L-serine + 2-oxoglutarate = 3-phosphooxypyruvate + L-glutamate. It carries out the reaction 4-(phosphooxy)-L-threonine + 2-oxoglutarate = (R)-3-hydroxy-2-oxo-4-phosphooxybutanoate + L-glutamate. Its pathway is amino-acid biosynthesis; L-serine biosynthesis; L-serine from 3-phospho-D-glycerate: step 2/3. It functions in the pathway cofactor biosynthesis; pyridoxine 5'-phosphate biosynthesis; pyridoxine 5'-phosphate from D-erythrose 4-phosphate: step 3/5. In terms of biological role, catalyzes the reversible conversion of 3-phosphohydroxypyruvate to phosphoserine and of 3-hydroxy-2-oxo-4-phosphonooxybutanoate to phosphohydroxythreonine. This is Phosphoserine aminotransferase from Pseudoalteromonas translucida (strain TAC 125).